Consider the following 305-residue polypeptide: uncharacterized protein (305 aa).

The ABC transporter domain occupies 5–233 (LELKNVTKNI…ENDTYFFQVE (229 aa)). 37–44 (GPNGAGKT) lines the ATP pocket.

This sequence belongs to the ABC transporter superfamily.

This is an uncharacterized protein from Bacillus subtilis (strain 168).